The following is a 520-amino-acid chain: GMP synthase [glutamine-hydrolyzing] (520 aa).

Residues 13–205 enclose the Glutamine amidotransferase type-1 domain; sequence KIIVLDYGSQ…ALNICKAKGD (193 aa). The active-site Nucleophile is C90. Catalysis depends on residues H179 and E181. The region spanning 206–395 is the GMPS ATP-PPase domain; that stretch reads WSMDNFIDMQ…LGMPDHIVWR (190 aa). Residue 233-239 participates in ATP binding; it reads SGGVDSS.

As to quaternary structure, homodimer.

The catalysed reaction is XMP + L-glutamine + ATP + H2O = GMP + L-glutamate + AMP + diphosphate + 2 H(+). It participates in purine metabolism; GMP biosynthesis; GMP from XMP (L-Gln route): step 1/1. Catalyzes the synthesis of GMP from XMP. This Streptococcus pneumoniae (strain ATCC 700669 / Spain 23F-1) protein is GMP synthase [glutamine-hydrolyzing].